A 170-amino-acid chain; its full sequence is uncharacterized protein (170 aa).

Positions 35 to 57 (EEVMPATAPSTDPAVPKDAQEAD) are disordered.

This is an uncharacterized protein from Candida tsukubaensis (Yeast).